The chain runs to 445 residues: Glycine--tRNA ligase (445 aa).

Positions 97 and 145 each coordinate substrate. Residues 177–179 (RNE), 187–192 (FRTCEF), 262–263 (EV), and 308–311 (GLTR) contribute to the ATP site. Residue 192–196 (FEQME) participates in substrate binding. 304–308 (ETSAG) provides a ligand contact to substrate.

This sequence belongs to the class-II aminoacyl-tRNA synthetase family. Homodimer.

The protein localises to the cytoplasm. The catalysed reaction is tRNA(Gly) + glycine + ATP = glycyl-tRNA(Gly) + AMP + diphosphate. In terms of biological role, catalyzes the attachment of glycine to tRNA(Gly). The chain is Glycine--tRNA ligase from Borrelia garinii subsp. bavariensis (strain ATCC BAA-2496 / DSM 23469 / PBi) (Borreliella bavariensis).